The primary structure comprises 1073 residues: Probable nuclear hormone receptor HR38 (1073 aa).

7 disordered regions span residues 55-87, 150-185, 263-326, 437-458, 492-514, 529-579, and 618-640; these read NLNA…LPPP, TPAP…SNCD, TQTA…LVSP, ALHA…QQHQ, KYNS…APTP, PPLS…NSGG, and GQQQ…NGER. Composition is skewed to low complexity over residues 59–82, 175–185, and 263–277; these read PTHQ…QQHP, DSNSDSNSNCD, and TQTA…ASAA. Positions 279–291 are enriched in basic residues; that stretch reads HHQHHNHLLHQQH. Low complexity-rich tracts occupy residues 292-326, 441-458, and 495-514; these read HNQQ…LVSP, QQQQ…QQHQ, and SSSG…APTP. The segment covering 619–636 has biased composition (low complexity); the sequence is QQQQQQQQSYQQHNYNSH. A DNA-binding region (nuclear receptor) is located at residues 741–816; it reads SQLCAVCGDT…VGMVKEVVRT (76 aa). 2 consecutive NR C4-type zinc fingers follow at residues 744–764 and 780–804; these read CAVC…CEGC and CLAD…FQKC. The interval 819–841 is disordered; the sequence is LKGRRGRLPSKPKSPQESPPSPP. Positions 840-1070 constitute an NR LBD domain; sequence PPISLITALV…ALIENMFVTT (231 aa).

It belongs to the nuclear hormone receptor family. NR4 subfamily. As to quaternary structure, forms a heterodimer with USP. As to expression, ubiquitously expressed in preblastoderm embryos, specifically in central nervous system and intestinal tract. Highly expressed in third instar larval imaginal disks and brain complexes, but not in ovaries.

The protein localises to the nucleus. Its function is as follows. Binds to NGFI-B response elements. Plays an important role in late stages of epidermal metamorphosis. In Drosophila melanogaster (Fruit fly), this protein is Probable nuclear hormone receptor HR38 (Hr38).